The chain runs to 391 residues: Protein kinase ORF14 (391 aa).

The 283-residue stretch at 109-391 (VPLRHTRGNI…ETLVDEFSKI (283 aa)) folds into the Protein kinase domain. Lysine 134 contacts ATP. The active-site Proton acceptor is the aspartate 235.

It belongs to the protein kinase superfamily. Ser/Thr protein kinase family.

The catalysed reaction is L-seryl-[protein] + ATP = O-phospho-L-seryl-[protein] + ADP + H(+). It catalyses the reaction L-threonyl-[protein] + ATP = O-phospho-L-threonyl-[protein] + ADP + H(+). The polypeptide is Protein kinase ORF14 (ORF14) (Ictalurid herpesvirus 1 (strain Auburn) (IcHV-1)).